An 81-amino-acid polypeptide reads, in one-letter code: MTIINNISTFGSKNNMANATQKIDFQNTTNQLNTSNNISNSLQSSAKINTTCDNSCSQNDIIIGGYKLPKSSELPYDCTIC.

This is an uncharacterized protein from Dictyostelium discoideum (Social amoeba).